The following is a 418-amino-acid chain: Acyltransferase calJ (418 aa).

Residue serine 79 is the Acyl-ester intermediate of the active site. Substrate-binding residues include arginine 176 and tyrosine 191.

The protein belongs to the class-A beta-lactamase family.

The protein operates within secondary metabolite biosynthesis. Its function is as follows. Acyltransferase; part of the gene cluster that mediates the biosynthesis of calbistrin A and related compounds. Calbistrin A is a secondary metabolite with an interesting structure that was recently found to have bioactivity against leukemia cells. It consists of two polyketides linked by an ester bond: a bicyclic decalin containing polyketide and a linear 12 carbon dioic acid structure. The polyketide synthase calA is probably responsible for forming the decalin moiety. Because calA lacks a designated enoylreductase (ER) domain, the required activity is provided by the trans-enoyl reductase calK. Following release from the PKS, calF then probably catalyzes the oxidation and the subsequent Diels Alder cycloisomerization that lead to the formation of the decalin moiety. The decalin polyketide backbone includes two C-methyl groups, at C7 and C11 in backbone, of which the C7 position is probably methylated by the methyltransferase domain of calA. A candidate for adding the methyl group at C11, if not done by CalA, is the cluster methyltransferase calH. Several additional tailoring enzymes within the cluster could be involved in the modification of the decalin polyketide product. Those include the 3 cytochrome P450 monooxygenases CalE, CalG and CalL, of which one might be responsible for the introduction of the extra hydroxyl group attached to the backbone of the decalin moiety, at position C9 in the backbone, that allows for attachment of the linear moiety. One tailoring enzyme activity that is expected to be involved in biosynthesis of calbistrin is an acyltransferase for connecting the two polyketide synthase products, and which could be performed by the cluster acyltransferase calJ. The enzyme responsible for the biosynthesis of the linear moiety, probably a second PKS, has not been identified yet. In Penicillium decumbens, this protein is Acyltransferase calJ.